The sequence spans 708 residues: Radial spoke head protein 6 homolog A (708 aa).

4 disordered regions span residues 1 to 94, 376 to 407, 495 to 514, and 663 to 708; these read MGEP…GYTP, ETHGEEEGEEDEEKVVDSVPKPQWKPPPIIPK, EEEGDEEEEGGAGRDSFEEN, and GPEI…DLED. A compositionally biased stretch (polar residues) spans 10 to 32; the sequence is PSQTRRASQGSERARSQEYSQPL. A compositionally biased stretch (low complexity) spans 47–56; sequence RGSRSSQGSQ. Positions 495–504 are enriched in acidic residues; the sequence is EEEGDEEEEG. The span at 680–690 shows a compositional bias: low complexity; it reads LKAAQEQALAA. Residues 691-708 are compositionally biased toward acidic residues; that stretch reads AEEEEEDEEEEEDEDLED.

The protein belongs to the flagellar radial spoke RSP4/6 family. As to quaternary structure, component of the axonemal radial spoke 1 (RS1) and 2 (RS2) complexes, at least composed of spoke head proteins RSPH1, RSPH3, RSPH9 and the cilia-specific component RSPH4A or sperm-specific component RSPH6A, spoke stalk proteins RSPH14, DNAJB13, DYDC1, ROPN1L and NME5, and the RS1 complex-specific anchor protein IQUB. Interacts with RSPH1. Interacts with RSPH3B. Interacts with RSPH4A. Interacts with RSPH9. Interacts with RSPH10B. Post-translationally, phosphorylated by PKA. Phosphorylation increases in capacitated sperm. As to expression, expressed in sperm and testis (at protein level).

The protein resides in the cytoplasm. Its subcellular location is the cytoskeleton. It is found in the flagellum axoneme. In terms of biological role, functions as part of radial spoke complexes in the axoneme of sperm flagella that play an important part in motility. The triple radial spokes (RS1, RS2 and RS3) are required to modulate beating of the sperm flagellum. In Mus musculus (Mouse), this protein is Radial spoke head protein 6 homolog A.